The following is a 118-amino-acid chain: Histone H2B.N (118 aa).

It belongs to the histone H2B family. As to quaternary structure, the nucleosome is a histone octamer containing two molecules each of H2A, H2B, H3 and H4 assembled in one H3-H4 heterotetramer and two H2A-H2B heterodimers. The octamer wraps approximately 147 bp of DNA. Expressed in germline. Predominantly expressed in oocytes.

It is found in the nucleus. The protein resides in the chromosome. Core component of nucleosome. Nucleosomes wrap and compact DNA into chromatin, limiting DNA accessibility to the cellular machineries which require DNA as a template. Histones thereby play a central role in transcription regulation, DNA repair, DNA replication and chromosomal stability. DNA accessibility is regulated via a complex set of post-translational modifications of histones, also called histone code, and nucleosome remodeling. In Homo sapiens (Human), this protein is Histone H2B.N.